A 354-amino-acid chain; its full sequence is Probable L-ascorbate-6-phosphate lactonase UlaG (354 aa).

Belongs to the UlaG family. A divalent metal cation serves as cofactor.

The protein resides in the cytoplasm. It catalyses the reaction L-ascorbate 6-phosphate + H2O = 3-dehydro-L-gulonate 6-phosphate. It functions in the pathway cofactor degradation; L-ascorbate degradation; D-xylulose 5-phosphate from L-ascorbate: step 1/4. Its function is as follows. Probably catalyzes the hydrolysis of L-ascorbate-6-P into 3-keto-L-gulonate-6-P. Is essential for L-ascorbate utilization under anaerobic conditions. The sequence is that of Probable L-ascorbate-6-phosphate lactonase UlaG from Shigella dysenteriae serotype 1 (strain Sd197).